Here is a 113-residue protein sequence, read N- to C-terminus: Large ribosomal subunit protein bL17 (113 aa).

The protein belongs to the bacterial ribosomal protein bL17 family. In terms of assembly, part of the 50S ribosomal subunit. Contacts protein L32.

The protein is Large ribosomal subunit protein bL17 of Clostridioides difficile (strain 630) (Peptoclostridium difficile).